A 733-amino-acid chain; its full sequence is Alpha-galactosidase 1 (733 aa).

The Nucleophile role is filled by Asp-480. Asp-550 functions as the Proton donor in the catalytic mechanism.

Belongs to the glycosyl hydrolase 36 family.

The enzyme catalyses Hydrolysis of terminal, non-reducing alpha-D-galactose residues in alpha-D-galactosides, including galactose oligosaccharides, galactomannans and galactolipids.. In terms of biological role, alpha-galactosidase associated with the raffinose operon. The polypeptide is Alpha-galactosidase 1 (agaR) (Pediococcus pentosaceus).